A 485-amino-acid chain; its full sequence is Ribosomal protein uS12 methylthiotransferase RimO (485 aa).

Positions 14-124 constitute an MTTase N-terminal domain; sequence PKVGFISLGC…VMAHVRELLP (111 aa). [4Fe-4S] cluster-binding residues include Cys23, Cys59, Cys88, Cys167, Cys171, and Cys174. The Radical SAM core domain maps to 153 to 389; sequence LTPRHYAYVK…MEVAQRISRE (237 aa). A TRAM domain is found at 392 to 468; that stretch reads AEKVGRVLDV…EYDLYGEVIH (77 aa).

The protein belongs to the methylthiotransferase family. RimO subfamily. [4Fe-4S] cluster is required as a cofactor.

It is found in the cytoplasm. It catalyses the reaction L-aspartate(89)-[ribosomal protein uS12]-hydrogen + (sulfur carrier)-SH + AH2 + 2 S-adenosyl-L-methionine = 3-methylsulfanyl-L-aspartate(89)-[ribosomal protein uS12]-hydrogen + (sulfur carrier)-H + 5'-deoxyadenosine + L-methionine + A + S-adenosyl-L-homocysteine + 2 H(+). Catalyzes the methylthiolation of an aspartic acid residue of ribosomal protein uS12. The protein is Ribosomal protein uS12 methylthiotransferase RimO of Deinococcus geothermalis (strain DSM 11300 / CIP 105573 / AG-3a).